The chain runs to 156 residues: Inorganic triphosphatase (156 aa).

In terms of domain architecture, CYTH spans 2 to 148 (GKEIEKKFIV…PRYLNSNLVK (147 aa)). Tyrosine 29 acts as the Proton acceptor in catalysis.

Homodimer.

The enzyme catalyses triphosphate + H2O = phosphate + diphosphate. The catalysed reaction is ATP + H2O = ADP + phosphate + H(+). Involved in the hydrolysis of the beta-gamma-phosphoanhydride linkage of triphosphate-containing substrates (inorganic or nucleoside-linked). Catalyzes vigorously the hydrolysis of inorganic triphosphate (PPPi), however it can also catalyze the hydrolysis of ATP to ADP and phosphate. It can use ribonucleotides such as GTP, CTP, or UTP and deoxynucleotides such as dATP, dGTP, dCTP, and dTTP. The polypeptide is Inorganic triphosphatase (Acetivibrio thermocellus (strain ATCC 27405 / DSM 1237 / JCM 9322 / NBRC 103400 / NCIMB 10682 / NRRL B-4536 / VPI 7372) (Clostridium thermocellum)).